The chain runs to 404 residues: Cysteine desulfurase IscS (404 aa).

Residues 75-76 (AT), asparagine 155, glutamine 183, and 203-205 (SAH) each bind pyridoxal 5'-phosphate. Lysine 206 carries the N6-(pyridoxal phosphate)lysine modification. Threonine 243 provides a ligand contact to pyridoxal 5'-phosphate. Residue cysteine 328 is the Cysteine persulfide intermediate of the active site. Cysteine 328 contributes to the [2Fe-2S] cluster binding site.

This sequence belongs to the class-V pyridoxal-phosphate-dependent aminotransferase family. NifS/IscS subfamily. As to quaternary structure, homodimer. Forms a heterotetramer with IscU, interacts with other sulfur acceptors. Requires pyridoxal 5'-phosphate as cofactor.

The protein localises to the cytoplasm. The catalysed reaction is (sulfur carrier)-H + L-cysteine = (sulfur carrier)-SH + L-alanine. It functions in the pathway cofactor biosynthesis; iron-sulfur cluster biosynthesis. Its function is as follows. Master enzyme that delivers sulfur to a number of partners involved in Fe-S cluster assembly, tRNA modification or cofactor biosynthesis. Catalyzes the removal of elemental sulfur atoms from cysteine to produce alanine. Functions as a sulfur delivery protein for Fe-S cluster synthesis onto IscU, an Fe-S scaffold assembly protein, as well as other S acceptor proteins. The protein is Cysteine desulfurase IscS of Stutzerimonas stutzeri (strain A1501) (Pseudomonas stutzeri).